The following is a 387-amino-acid chain: Queuine tRNA-ribosyltransferase (387 aa).

The active-site Proton acceptor is the aspartate 105. Residues 105-109, aspartate 177, and glycine 248 each bind substrate; that span reads DSGGF. The tract at residues 278–284 is RNA binding; that stretch reads GIGDLPS. Residue aspartate 297 is the Nucleophile of the active site. The RNA binding; important for wobble base 34 recognition stretch occupies residues 302–306; that stretch reads TRAAR. Cysteine 335, cysteine 337, cysteine 340, and histidine 366 together coordinate Zn(2+).

Belongs to the queuine tRNA-ribosyltransferase family. Homodimer. Within each dimer, one monomer is responsible for RNA recognition and catalysis, while the other monomer binds to the replacement base PreQ1. Zn(2+) serves as cofactor.

The enzyme catalyses 7-aminomethyl-7-carbaguanine + guanosine(34) in tRNA = 7-aminomethyl-7-carbaguanosine(34) in tRNA + guanine. It participates in tRNA modification; tRNA-queuosine biosynthesis. Its function is as follows. Catalyzes the base-exchange of a guanine (G) residue with the queuine precursor 7-aminomethyl-7-deazaguanine (PreQ1) at position 34 (anticodon wobble position) in tRNAs with GU(N) anticodons (tRNA-Asp, -Asn, -His and -Tyr). Catalysis occurs through a double-displacement mechanism. The nucleophile active site attacks the C1' of nucleotide 34 to detach the guanine base from the RNA, forming a covalent enzyme-RNA intermediate. The proton acceptor active site deprotonates the incoming PreQ1, allowing a nucleophilic attack on the C1' of the ribose to form the product. After dissociation, two additional enzymatic reactions on the tRNA convert PreQ1 to queuine (Q), resulting in the hypermodified nucleoside queuosine (7-(((4,5-cis-dihydroxy-2-cyclopenten-1-yl)amino)methyl)-7-deazaguanosine). The chain is Queuine tRNA-ribosyltransferase from Protochlamydia amoebophila (strain UWE25).